Here is a 153-residue protein sequence, read N- to C-terminus: Neuromedin-S (153 aa).

The first 26 residues, 1-26 (MKHPLPHYSPILFIYCFCMLQIPSSG), serve as a signal peptide directing secretion. 3 propeptides span residues 27-69 (ASPP…VYKR), 70-105 (FLFH…ASRR), and 106-108 (MKR). An Asparagine amide modification is found at Asn144. A propeptide spanning residues 147–153 (YTDNNFQ) is cleaved from the precursor.

This sequence belongs to the NmU family.

It localises to the secreted. In terms of biological role, implicated in the regulation of circadian rhythms through autocrine and/or paracrine actions. This chain is Neuromedin-S (Nms), found in Mus musculus (Mouse).